We begin with the raw amino-acid sequence, 172 residues long: Protein GrpE (172 aa).

Residues 1 to 23 (MNQDHPECDSEELTQNSPETDPL) are disordered.

The protein belongs to the GrpE family. In terms of assembly, homodimer.

Its subcellular location is the cytoplasm. Its function is as follows. Participates actively in the response to hyperosmotic and heat shock by preventing the aggregation of stress-denatured proteins, in association with DnaK and GrpE. It is the nucleotide exchange factor for DnaK and may function as a thermosensor. Unfolded proteins bind initially to DnaJ; upon interaction with the DnaJ-bound protein, DnaK hydrolyzes its bound ATP, resulting in the formation of a stable complex. GrpE releases ADP from DnaK; ATP binding to DnaK triggers the release of the substrate protein, thus completing the reaction cycle. Several rounds of ATP-dependent interactions between DnaJ, DnaK and GrpE are required for fully efficient folding. This chain is Protein GrpE, found in Xylella fastidiosa (strain M23).